The sequence spans 898 residues: MNTKMNERWRTPMKLKYLSCTILAPLAIGVFSATAADNNSAIYFNTSQPINDLQGSLAAEVKFAQSQILPAHPKEGDSQPHLTSLRKSLLLVRPVKADDKTPVQVEARDDNNKILGTLTLYPPSSLPDTIYHLDGVPEGGIDFTPHNGTKKIINTVAEVNKLSDASGSSIHSHLTNNALVEIHTANGRWVRDIYLPQGPDLEGKMVRFVSSAGYSSTVFYGDRKVTLSVGNTLLFKYVNGQWFRSGELENNRITYAQHIWSAELPAHWIVPGLNLVIKQGNLSGRLNDIKIGAPGELLLHTIDIGMLTTPRDRFDFAKDKEAHREYFQTIPVSRMIVNNYAPLHLKEVMLPTGELLTDMDPGNGGWHSGTMRQRIGKELVSHGIDNANYGLNSTAGLGENSHPYVVAQLAAHNSRGNYANGIQVHGGSGGGGIVTLDSTLGNEFSHEVGHNYGLGHYVDGFKGSVHRSAENNNSTWGWDGDKKRFIPNFYPSQTNEKSCLNNQCQEPFDGHKFGFDAMAGGSPFSAANRFTMYTPNSSAIIQRFFENKAVFDSRSSTGFSKWNADTQEMEPYEHTIDRAEQITASVNELSESKMAELMAEYAVVKVHMWNGNWTRNIYIPTASADNRGSILTINHEAGYNSYLFINGDEKVVSQGYKKSFVSDGQFWKERDVVDTREARKPEQFGVPVTTLVGYYDPEGTLSSYIYPAMYGAYGFTYSDDSQNLSDNDCQLQVDTKEGQLRFRLANHRANNTVMNKFHINVPTESQPTQATLVCNNKILDTKSLTPAPEGLTYTVNGQALPAKENEGCIVSVNSGKRYCLPVGQRSGYSLPDWIVGQEVYVDSGAKAKVLLSDWDNLSYNRIGEFVGNVNPADMKKVKAWNGQYLDFSKPRSMRVVYK.

A signal peptide spans 1 to 35 (MNTKMNERWRTPMKLKYLSCTILAPLAIGVFSATA). A Peptidase M66 domain is found at 296-551 (ELLLHTIDIG…QRFFENKAVF (256 aa)). Histidine 446 lines the Zn(2+) pocket. Glutamate 447 is a catalytic residue. Zn(2+) contacts are provided by histidine 450 and histidine 456.

Requires Zn(2+) as cofactor.

Its subcellular location is the secreted. Its activity is regulated as follows. Inhibited by divalent cation chelators such as BPS and EDTA. Virulence factor that contributes to intimate adherence of enterohemorrhagic E.coli (EHEC) O157:H7 to host cells. Is able to cleave the secreted human mucin 7 (MUC7) and the glycoprotein 340 (DMBT1/GP340). Also cleaves human C1 inhibitor (SERPING1), a regulator of multiple inflammatory pathways, and binds and localizes it to bacterial and host cell surfaces, protecting them from complement-mediated lysis. Therefore, the current model proposes two roles for StcE during infection: it acts first as a mucinase, allowing passage of EHEC through the oral cavity by cleaving the salivary glycoproteins that are responsible for bacterial aggregation. Similarly, in the colon, StcE cleaves the glycoproteins that protect the intestinal epithelial surface, allowing EHEC to come into close contact with host cell membranes. Secondly, it acts as an anti-inflammatory agent by localizing SERPING1 to cell membranes. The polypeptide is Metalloprotease StcE (stcE) (Escherichia coli O157:H7).